A 422-amino-acid polypeptide reads, in one-letter code: MDRFTIKGPVKLQGEVEISGSKNAALPILMATLLTDEKCVLNRVPNLRDIRTTFKLLEVLGKKVEYNNGTAVITKNKELNSILPYELVKQMRASFWVAGPLLARLKHTQIPLPGGCAIGVRPVDIHLQGFKKFGAAESTKKGDVVISADELKPAKIVLRFPSVGATINIMMCASLIPGKTIIENAAKEPEVEDLICALKTMGAQISIDSKGRIIVEGKKTLGSMTHTVVADRIETGTFILAAAATKGDVVIKNCVPEHNDILLENLKDAGFGVSVGQGRIHITAPSNGKIKPVGIRTMPYPGFATDLQAPYMVLLCVADGGSDITEDIFENRYMHAPELVRMGADITIEKTMAKVKGVKELSGANVMASDLRGGAALVIAALCAAGDTVIDRVYHIDRGYENIEAKFAALGAKIVRDNPLKD.

22-23 contributes to the phosphoenolpyruvate binding site; sequence KN. Position 92 (arginine 92) interacts with UDP-N-acetyl-alpha-D-glucosamine. Cysteine 116 serves as the catalytic Proton donor. At cysteine 116 the chain carries 2-(S-cysteinyl)pyruvic acid O-phosphothioketal. The UDP-N-acetyl-alpha-D-glucosamine site is built by aspartate 306 and isoleucine 328.

This sequence belongs to the EPSP synthase family. MurA subfamily.

The protein resides in the cytoplasm. It carries out the reaction phosphoenolpyruvate + UDP-N-acetyl-alpha-D-glucosamine = UDP-N-acetyl-3-O-(1-carboxyvinyl)-alpha-D-glucosamine + phosphate. It participates in cell wall biogenesis; peptidoglycan biosynthesis. Its function is as follows. Cell wall formation. Adds enolpyruvyl to UDP-N-acetylglucosamine. The polypeptide is UDP-N-acetylglucosamine 1-carboxyvinyltransferase (Elusimicrobium minutum (strain Pei191)).